The chain runs to 123 residues: Protein Wnt-3a (123 aa).

Residue serine 1 is the site of O-palmitoleoyl serine attachment. Cysteine 89 and cysteine 104 form a disulfide bridge. The N-linked (GlcNAc...) asparagine glycan is linked to asparagine 90.

It belongs to the Wnt family. Disulfide bonds have critical and distinct roles in secretion and activity. Loss of each conserved cysteine results in high molecular weight oxidized Wnt oligomers, which are formed through inter-Wnt disulfide bonding. In terms of processing, palmitoleoylation is required for efficient binding to frizzled receptors. Depalmitoleoylation leads to Wnt signaling pathway inhibition.

Its subcellular location is the secreted. It is found in the extracellular space. The protein localises to the extracellular matrix. In terms of biological role, ligand for members of the frizzled family of seven transmembrane receptors. Functions in the canonical Wnt signaling pathway that results in activation of transcription factors of the TCF/LEF family. Required for normal embryonic mesoderm development and formation of caudal somites. Required for normal morphogenesis of the developing neural tube. The polypeptide is Protein Wnt-3a (WNT-3A) (Alopias vulpinus (Common thresher shark)).